The following is a 465-amino-acid chain: Endo-1,3-1,4-beta-glycanase ExsH (465 aa).

3 Hemolysin-type calcium-binding repeats span residues 33-50 (HGTA…VNVT), 105-122 (FGNE…TQTI), and 123-140 (DGRG…ADTF). Residues 206-462 (AHQFRLSLDR…YIKAYSLDAD (257 aa)) form the GH16 domain. Residue glutamate 349 is the Nucleophile of the active site. Glutamate 354 functions as the Proton donor in the catalytic mechanism.

It belongs to the glycosyl hydrolase 16 family.

It localises to the secreted. Its pathway is glycan metabolism; exopolysaccharide biosynthesis. In terms of biological role, cleaves high molecular weight succinoglycan to yield LMW succinoglycan. Dynamically regulates the molecular weight distribution of succinoglycan by cleaving nascent succinoglycan only during a limited period after its synthesis, perhaps before it undergoes a time-dependent change in its conformation or aggregation state. This Rhizobium meliloti (strain 1021) (Ensifer meliloti) protein is Endo-1,3-1,4-beta-glycanase ExsH (exsH).